The chain runs to 491 residues: Glutamate--tRNA ligase (491 aa).

The 'HIGH' region signature appears at 14–24 (PSPTGSPHVGL). Positions 111, 113, 136, and 138 each coordinate Zn(2+). The 'KMSKS' region signature appears at 257–261 (KLSKR). Residue lysine 260 coordinates ATP.

The protein belongs to the class-I aminoacyl-tRNA synthetase family. Glutamate--tRNA ligase type 1 subfamily. As to quaternary structure, monomer. Zn(2+) is required as a cofactor.

It is found in the cytoplasm. The catalysed reaction is tRNA(Glu) + L-glutamate + ATP = L-glutamyl-tRNA(Glu) + AMP + diphosphate. Functionally, catalyzes the attachment of glutamate to tRNA(Glu) in a two-step reaction: glutamate is first activated by ATP to form Glu-AMP and then transferred to the acceptor end of tRNA(Glu). This is Glutamate--tRNA ligase from Nocardioides sp. (strain ATCC BAA-499 / JS614).